Consider the following 332-residue polypeptide: 4-hydroxyproline 2-epimerase 2 (332 aa).

Residue Cys-89 is the Proton acceptor of the active site. Substrate is bound by residues His-222, Asp-248, and 253 to 254 (GT).

This sequence belongs to the proline racemase family.

The catalysed reaction is trans-4-hydroxy-L-proline = cis-4-hydroxy-D-proline. In terms of biological role, catalyzes the epimerization of trans-4-hydroxy-L-proline (t4LHyp) to cis-4-hydroxy-D-proline (c4DHyp). Is likely involved in a degradation pathway that converts t4LHyp to alpha-ketoglutarate. Displays no proline racemase activity. The polypeptide is 4-hydroxyproline 2-epimerase 2 (Rhizobium rhizogenes (strain K84 / ATCC BAA-868) (Agrobacterium radiobacter)).